The chain runs to 667 residues: uncharacterized protein (667 aa).

This is an uncharacterized protein from Mycoplasma genitalium (strain ATCC 33530 / DSM 19775 / NCTC 10195 / G37) (Mycoplasmoides genitalium).